The sequence spans 299 residues: Protease HtpX homolog (299 aa).

The next 2 membrane-spanning stretches (helical) occupy residues 19–39 and 41–61; these read LFIVLFSLILFAVGYFFVWYF and WGITGIIFLAIFIVLYNWIAY. Zn(2+) is bound at residue histidine 146. Glutamate 147 is a catalytic residue. Histidine 150 lines the Zn(2+) pocket. Transmembrane regions (helical) follow at residues 156 to 176 and 198 to 218; these read ILLMTVVAIVAGLIILLRDVF and IILLLIGLILSIIAPIVVLII. Glutamate 227 contributes to the Zn(2+) binding site.

It belongs to the peptidase M48B family. It depends on Zn(2+) as a cofactor.

Its subcellular location is the cell membrane. The protein is Protease HtpX homolog of Caldanaerobacter subterraneus subsp. tengcongensis (strain DSM 15242 / JCM 11007 / NBRC 100824 / MB4) (Thermoanaerobacter tengcongensis).